Reading from the N-terminus, the 447-residue chain is Trimethylamine monooxygenase (447 aa).

Residues S13, E38, Q40, L46, W47, and H63 each coordinate FAD. Residues W71 and N73 each contribute to the NADP(+) site. N73 and V126 together coordinate FAD. Residues Y173, A205, S206, S208, and R229 each coordinate NADP(+). Positions 318 and 321 each coordinate FAD. R413 is an NADP(+) binding site.

It belongs to the FMO family. Requires FAD as cofactor.

The catalysed reaction is trimethylamine + NADPH + O2 = trimethylamine N-oxide + NADP(+) + H2O. Its function is as follows. Catalyzes the oxidation of trimethylamine (TMA) to produce trimethylamine N-oxide (TMAO). TMA is the best substrate, but the enzyme can also oxidize methimazole, indole and dimethylamine (DMA). The chain is Trimethylamine monooxygenase from Roseovarius nubinhibens (strain ATCC BAA-591 / DSM 15170 / ISM).